A 251-amino-acid chain; its full sequence is MSGHNKWANIKHRKGAQDAKRSQMFTKLIRELTIAAREGGGDPESNPRLRTAVENAKAANMPKDKIESAIKKGTGELEGEELTEIMYEAYGPGGVALLISVVTDNKNRTAQEVRHVLSKWGGALAESGSVSWNFERKGLITIPKEEVEDIDELMLLAVEAGAEDLDENTDPLEIITAPENLTQVRNALKEAGYTVSEKLTFLPKTTVKLSDEDAEKLLKLLNALDDMDDVQEVFGNYEIDDEVMERLAANI.

A disordered region spans residues 1 to 22; that stretch reads MSGHNKWANIKHRKGAQDAKRS.

Belongs to the TACO1 family.

Its subcellular location is the cytoplasm. This chain is Probable transcriptional regulatory protein Pmob_0807, found in Petrotoga mobilis (strain DSM 10674 / SJ95).